The primary structure comprises 197 residues: MVTKKQSRVPGRPRRFAPEQAISAAKVLFHQKGFDAVSVAEVTDYLGINPPSLYAAFGSKAGLFSRVLNEYVGTEAIPLADILRDDRPVGECLVEVLKEAARRYSQNGGCAGCMVLEGIHSHDPQARDIAVQYYHAAETTIYDYIARRHPQRAQCVTDFMSTVMSGLSAKAREGHSIEQLCATAAMAGEAIKTILEE.

In terms of domain architecture, HTH tetR-type spans 15–75 (RFAPEQAISA…RVLNEYVGTE (61 aa)). Residues 38-57 (SVAEVTDYLGINPPSLYAAF) constitute a DNA-binding region (H-T-H motif).

Negatively regulates expression of bdcA. The sequence is that of HTH-type transcriptional repressor BdcR (bdcR) from Escherichia coli (strain K12).